The sequence spans 823 residues: High affinity cAMP-specific and IBMX-insensitive 3',5'-cyclic phosphodiesterase 8A (823 aa).

Residues 1–55 (MGCAPSIHTSENRTFSHSDGEDEDVDVDVPGPAPRSIQRWSTAPGLVEPQPRDNG) form a disordered region. Positions 10-19 (SENRTFSHSD) are enriched in basic and acidic residues. One can recognise a PAS domain in the interval 209–280 (ACNSVFTALE…AINSCVTVDK (72 aa)). Residues 283–325 (QGVYHTQKKNGDNIQQNVKIIPVIGQGGKIRHYVSIIRVCNGN) enclose the PAC domain. Positions 338 to 373 (DSQTDNQAGKHKDRRKHSMDAKAVSSRTSDVSSQRR) are disordered. S355 carries the phosphoserine; by PKA modification. S382 and S452 each carry phosphoserine. The residue at position 456 (Y456) is a Phosphotyrosine. Positions 475–814 (SLHDVPPRIA…RYWKGLDEKK (340 aa)) constitute a PDEase domain. H551 functions as the Proton donor in the catalytic mechanism. A divalent metal cation-binding residues include H555, H591, D592, and D720.

The protein belongs to the cyclic nucleotide phosphodiesterase family. PDE8 subfamily. Interacts with RAF1. The interaction promotes RAF1 activity. A divalent metal cation serves as cofactor. Phosphorylated at Ser-355 by PKA under elevated cAMP conditions, this enhances catalytic activity. In terms of tissue distribution, expressed in multiple tissues, with highest levels in testis, followed by liver, heart, skeletal muscle, and kidney. In the testis, expressed specifically in the seminiferous tubules, in postmitotic pachytene spermatocytes. Low expression, if any, in lung, smooth muscle, pancreas, thyroid, thymus, submaxillary gland, spleen, prostate, epididymus, uterus.

It catalyses the reaction 3',5'-cyclic AMP + H2O = AMP + H(+). The protein operates within purine metabolism; 3',5'-cyclic AMP degradation; AMP from 3',5'-cyclic AMP: step 1/1. With respect to regulation, inhibited by dipyridimole. Insensitive to selective PDE inhibitor rolipram and to the non-selective inhibitor, IBMX. Its function is as follows. Hydrolyzes the second messenger cAMP, which is a key regulator of many important physiological processes. May be involved in maintaining basal levels of the cyclic nucleotide and/or in the cAMP regulation of germ cell development. Binding to RAF1 reduces RAF1 'Ser-259' inhibitory-phosphorylation and stimulates RAF1-dependent EGF-activated ERK-signaling. Protects against cell death induced by hydrogen peroxide and staurosporine. The polypeptide is High affinity cAMP-specific and IBMX-insensitive 3',5'-cyclic phosphodiesterase 8A (Pde8a) (Mus musculus (Mouse)).